The following is a 288-amino-acid chain: Pyridoxal kinase PdxY (288 aa).

Substrate-binding positions include serine 12 and 47 to 48; that span reads TQ. ATP-binding positions include aspartate 114, glutamate 151, lysine 184, and 211 to 214; that span reads RPLL. Aspartate 225 is a substrate binding site.

This sequence belongs to the pyridoxine kinase family. PdxY subfamily. In terms of assembly, homodimer. The cofactor is Mg(2+).

The enzyme catalyses pyridoxal + ATP = pyridoxal 5'-phosphate + ADP + H(+). Its pathway is cofactor metabolism; pyridoxal 5'-phosphate salvage; pyridoxal 5'-phosphate from pyridoxal: step 1/1. Functionally, pyridoxal kinase involved in the salvage pathway of pyridoxal 5'-phosphate (PLP). Catalyzes the phosphorylation of pyridoxal to PLP. The polypeptide is Pyridoxal kinase PdxY (Pseudomonas paraeruginosa (strain DSM 24068 / PA7) (Pseudomonas aeruginosa (strain PA7))).